Consider the following 206-residue polypeptide: Large ribosomal subunit protein uL4 (206 aa).

Residues 44-80 (KRAGTHSVKTRSTISGGGAKPWRQKGTGRARSGSNRS) form a disordered region.

This sequence belongs to the universal ribosomal protein uL4 family. In terms of assembly, part of the 50S ribosomal subunit.

In terms of biological role, one of the primary rRNA binding proteins, this protein initially binds near the 5'-end of the 23S rRNA. It is important during the early stages of 50S assembly. It makes multiple contacts with different domains of the 23S rRNA in the assembled 50S subunit and ribosome. Forms part of the polypeptide exit tunnel. The sequence is that of Large ribosomal subunit protein uL4 from Oleidesulfovibrio alaskensis (strain ATCC BAA-1058 / DSM 17464 / G20) (Desulfovibrio alaskensis).